Here is a 176-residue protein sequence, read N- to C-terminus: NAD(P)H-quinone oxidoreductase subunit 6, chloroplastic (176 aa).

5 helical membrane passes run 10 to 30, 33 to 53, 60 to 80, 95 to 115, and 152 to 172; these read ILML…VLLT, IYSA…YFLL, VAQL…AVMF, IGDG…MTTI, and FYLP…GAIT.

The protein belongs to the complex I subunit 6 family. In terms of assembly, NDH is composed of at least 16 different subunits, 5 of which are encoded in the nucleus.

It is found in the plastid. Its subcellular location is the chloroplast thylakoid membrane. It carries out the reaction a plastoquinone + NADH + (n+1) H(+)(in) = a plastoquinol + NAD(+) + n H(+)(out). The catalysed reaction is a plastoquinone + NADPH + (n+1) H(+)(in) = a plastoquinol + NADP(+) + n H(+)(out). Functionally, NDH shuttles electrons from NAD(P)H:plastoquinone, via FMN and iron-sulfur (Fe-S) centers, to quinones in the photosynthetic chain and possibly in a chloroplast respiratory chain. The immediate electron acceptor for the enzyme in this species is believed to be plastoquinone. Couples the redox reaction to proton translocation, and thus conserves the redox energy in a proton gradient. The polypeptide is NAD(P)H-quinone oxidoreductase subunit 6, chloroplastic (ndhG) (Hordeum vulgare (Barley)).